Here is a 234-residue protein sequence, read N- to C-terminus: NLP effector protein 10 (234 aa).

An N-terminal signal peptide occupies residues 1-17 (MFKTFIIAAVAVATVRA). Asn65 carries N-linked (GlcNAc...) asparagine glycosylation. The Conserved undecapeptide motif I signature appears at 101 to 111 (AIMYSWYFPKD). A Hepta-peptide GHRHDWE motif II motif is present at residues 118 to 124 (GHRHDWE).

It belongs to the Necrosis inducing protein (NPP1) family.

The protein resides in the secreted. Its function is as follows. Secreted effector that contributes moderately to virulence during infection by P.capsici. Does not cause visible reaction of C.annuum for several days after inoculation, but by 7 days after inoculation, small necrotic lesions become visible. Leads only to chlorotic areas, without necrosis at 7 days after non-host N.benthamiana leaves infection. The protein is NLP effector protein 10 of Phytophthora capsici.